Consider the following 300-residue polypeptide: Dihydroorotate dehydrogenase B (NAD(+)), catalytic subunit (300 aa).

FMN contacts are provided by residues Ser20 and 44–45; that span reads KG. Substrate contacts are provided by residues Lys44 and 68-72; that span reads NSVGL. Asn98 and Asn124 together coordinate FMN. Asn124 is a binding site for substrate. Catalysis depends on Cys127, which acts as the Nucleophile. The FMN site is built by Lys162 and Ile188. 189–190 lines the substrate pocket; that stretch reads NT. FMN contacts are provided by residues Gly214, 240-241, and 262-263; these read GG and GT.

Belongs to the dihydroorotate dehydrogenase family. Type 1 subfamily. As to quaternary structure, heterotetramer of 2 PyrK and 2 PyrD type B subunits. FMN is required as a cofactor.

The protein localises to the cytoplasm. It catalyses the reaction (S)-dihydroorotate + NAD(+) = orotate + NADH + H(+). It functions in the pathway pyrimidine metabolism; UMP biosynthesis via de novo pathway; orotate from (S)-dihydroorotate (NAD(+) route): step 1/1. Functionally, catalyzes the conversion of dihydroorotate to orotate with NAD(+) as electron acceptor. The chain is Dihydroorotate dehydrogenase B (NAD(+)), catalytic subunit (pyrD) from Caldicellulosiruptor bescii (strain ATCC BAA-1888 / DSM 6725 / KCTC 15123 / Z-1320) (Anaerocellum thermophilum).